The following is a 135-amino-acid chain: Aspartate 1-decarboxylase (135 aa).

Ser-25 (schiff-base intermediate with substrate; via pyruvic acid) is an active-site residue. A Pyruvic acid (Ser) modification is found at Ser-25. Thr-57 lines the substrate pocket. The active-site Proton donor is Tyr-58. A substrate-binding site is contributed by 73-75 (GAA).

The protein belongs to the PanD family. As to quaternary structure, heterooctamer of four alpha and four beta subunits. Requires pyruvate as cofactor. Post-translationally, is synthesized initially as an inactive proenzyme, which is activated by self-cleavage at a specific serine bond to produce a beta-subunit with a hydroxyl group at its C-terminus and an alpha-subunit with a pyruvoyl group at its N-terminus.

The protein resides in the cytoplasm. The catalysed reaction is L-aspartate + H(+) = beta-alanine + CO2. Its pathway is cofactor biosynthesis; (R)-pantothenate biosynthesis; beta-alanine from L-aspartate: step 1/1. Catalyzes the pyruvoyl-dependent decarboxylation of aspartate to produce beta-alanine. This is Aspartate 1-decarboxylase from Mycolicibacterium vanbaalenii (strain DSM 7251 / JCM 13017 / BCRC 16820 / KCTC 9966 / NRRL B-24157 / PYR-1) (Mycobacterium vanbaalenii).